The sequence spans 301 residues: MSYPTKEGSDTAGNAHKNSENEPPNDCSTDIESPSADPNMIYQVETNPINREPGTATSQEDVVPQAAENSELETEIQKDQREEDLKEELLLLQTPIPRKLVSHKPLNDRSRSHSGKVEMKANNFPINHKTRFRLSTSWRVPFINSHEIRSMILHLLCDRYFSQAAGCQNTMWVKRKYIACLYHPNSFTHHERAITFRRPSRVHYYRPLTERMTSGKFCKSTDTKGKCRFRAIVRSVLFVSQIQIESIFNIKGFVDILTYIHTMNVMITNTNNGWKYFCPICGRLFNTYSELRQHSCSSSGN.

The tract at residues 1 to 77 is disordered; the sequence is MSYPTKEGSD…ENSELETEIQ (77 aa). The segment covering 44 to 60 has biased composition (polar residues); that stretch reads VETNPINREPGTATSQE.

As to expression, expressed in a variety of fetal tissues.

The protein is CPX chromosomal region candidate gene 1 protein (CPXCR1) of Homo sapiens (Human).